The primary structure comprises 136 residues: Translation initiation factor 5A (136 aa).

Lysine 37 bears the Hypusine mark.

Belongs to the eIF-5A family.

It localises to the cytoplasm. Functionally, functions by promoting the formation of the first peptide bond. The chain is Translation initiation factor 5A (eIF5A) from Thermococcus gammatolerans (strain DSM 15229 / JCM 11827 / EJ3).